Consider the following 324-residue polypeptide: MWALDFLLSFLLIQLAAQVDSSGTWCYDSQDPKCGPAHWKELAPACGGPTQSPINIDLRLVQRDYTLKPFIFQGYDSAPQDPWVLENDGHTVLLRVNSCQQNCPAIRGAGLPSPEYRLLQLHFHWGSPGHQGSEHSLDEKHGSMEMHMVHMNTKYQSMEDARSQPDGFAILAVLLVEEDRDNTNFSAIVSGLKNLSSPGVAVNLTSTFALASLLPSALRLLRYYRYSGSLTTPGCEPAVLWTVFENTVPIGHAQVVQFQAVLQTGPPGLHPRPLTSNFRPQQPLGGRRISASPEASVRSSVSTLPCLHLALVGLGVGLRLWQGP.

The N-terminal stretch at 1 to 18 (MWALDFLLSFLLIQLAAQ) is a signal peptide. Residues 23-293 (GTWCYDSQDP…LGGRRISASP (271 aa)) enclose the Alpha-carbonic anhydrase domain. The Proton acceptor role is filled by His-90. Zn(2+) is bound by residues His-122, His-124, and His-147. Residue Tyr-155 is part of the active site. N-linked (GlcNAc...) asparagine glycosylation is found at Asn-184, Asn-194, and Asn-203. Substrate is bound at residue 231 to 232 (TT). A disordered region spans residues 269–290 (LHPRPLTSNFRPQQPLGGRRIS).

It belongs to the alpha-carbonic anhydrase family. Zn(2+) serves as cofactor.

The protein localises to the secreted. It carries out the reaction hydrogencarbonate + H(+) = CO2 + H2O. With respect to regulation, repressed by coumarins. Reversible hydration of carbon dioxide. The protein is Carbonic anhydrase 15 (Ca15) of Mus musculus (Mouse).